The following is a 146-amino-acid chain: Globin (146 aa).

A1 bears the N-acetylalanine mark. The Globin domain maps to 1–146; sequence ALTEPQKTAL…LLTMLIKAHS (146 aa). Residues H65 and H97 each coordinate heme b.

Belongs to the globin family. As to quaternary structure, homodimer.

In Buccinum undatum (Common whelk), this protein is Globin.